The following is a 149-amino-acid chain: Ribonuclease H (149 aa).

The RNase H type-1 domain maps to 1-145 (MKKVIIYTDG…CDKLANEAMD (145 aa)). Residues aspartate 9, glutamate 50, aspartate 72, and aspartate 137 each coordinate Mg(2+).

The protein belongs to the RNase H family. Monomer. Mg(2+) is required as a cofactor.

Its subcellular location is the cytoplasm. It carries out the reaction Endonucleolytic cleavage to 5'-phosphomonoester.. Functionally, endonuclease that specifically degrades the RNA of RNA-DNA hybrids. This Clostridium botulinum (strain ATCC 19397 / Type A) protein is Ribonuclease H.